A 429-amino-acid polypeptide reads, in one-letter code: G2/mitotic-specific cyclin-B1 (429 aa).

A compositionally biased stretch (polar residues) spans 1–14; sequence MALRVTRNTKLNTE. Disordered stretches follow at residues 1–21 and 71–128; these read MALR…KVSM and TGKV…PMET. Lys-73 bears the N6-acetyllysine mark. Over residues 92-106 the composition is skewed to acidic residues; sequence PEVELAEPEPEPEPV. Position 122 is a phosphoserine; by CDK1 (Ser-122). Ser-124 bears the Phosphoserine mark. Ser-129 bears the Phosphoserine; by PLK1 mark. The residue at position 143 (Ser-143) is a Phosphoserine. Interaction with CDK2 regions lie at residues 165–173 and 254–257; these read EYVKDIYAY and YEEM. A Phosphothreonine modification is found at Thr-317.

It belongs to the cyclin family. Cyclin AB subfamily. Interacts with the CDC2 protein kinase to form a serine/threonine kinase holoenzyme complex also known as maturation promoting factor (MPF). The cyclin subunit imparts substrate specificity to the complex. Binds HEI10. Interacts with catalytically active RALBP1 and CDC2 during mitosis to form an endocytotic complex during interphase. Interacts with CCNF; interaction is required for nuclear localization. Interacts with CDK5RAP3. Interacts with RFPL4A and UBE2A. Interacts with INCA1. In terms of processing, ubiquitinated by the SCF(NIPA) complex during interphase, leading to its destruction. Not ubiquitinated during G2/M phases. Post-translationally, phosphorylated by PLK1 at Ser-129 on centrosomes during prophase: phosphorylation by PLK1 does not cause nuclear import. Phosphorylation at Ser-143 was also reported to be mediated by PLK1 but Ser-129 seems to be the primary phosphorylation site.

It localises to the cytoplasm. Its subcellular location is the nucleus. The protein resides in the cytoskeleton. The protein localises to the microtubule organizing center. It is found in the centrosome. Its function is as follows. Essential for the control of the cell cycle at the G2/M (mitosis) transition. This is G2/mitotic-specific cyclin-B1 (CCNB1) from Cricetulus griseus (Chinese hamster).